Consider the following 466-residue polypeptide: UDP-N-acetylmuramate--L-alanine ligase (466 aa).

ATP is bound at residue 119-125 (GTHGKTT).

The protein belongs to the MurCDEF family.

It localises to the cytoplasm. It carries out the reaction UDP-N-acetyl-alpha-D-muramate + L-alanine + ATP = UDP-N-acetyl-alpha-D-muramoyl-L-alanine + ADP + phosphate + H(+). It participates in cell wall biogenesis; peptidoglycan biosynthesis. Its function is as follows. Cell wall formation. The chain is UDP-N-acetylmuramate--L-alanine ligase from Cytophaga hutchinsonii (strain ATCC 33406 / DSM 1761 / CIP 103989 / NBRC 15051 / NCIMB 9469 / D465).